We begin with the raw amino-acid sequence, 444 residues long: Tol-Pal system protein TolB (444 aa).

Residues 1-19 form the signal peptide; it reads MRNIIYFILSLLFSVTSYA.

The protein belongs to the TolB family. The Tol-Pal system is composed of five core proteins: the inner membrane proteins TolA, TolQ and TolR, the periplasmic protein TolB and the outer membrane protein Pal. They form a network linking the inner and outer membranes and the peptidoglycan layer.

The protein resides in the periplasm. Part of the Tol-Pal system, which plays a role in outer membrane invagination during cell division and is important for maintaining outer membrane integrity. This is Tol-Pal system protein TolB from Rickettsia conorii (strain ATCC VR-613 / Malish 7).